Here is a 337-residue protein sequence, read N- to C-terminus: MDQYITLVELYIYDCNLFKSKNLKSFYKVHRVPEGDIVPKRRGGQLAGVTKSWVETNLVHFPLWLSEWDETRWGVLNHYPLESWLEKNVSSKVPVNPVMWNFDSECLVYFFHNGRRTPFLTPKGVVKLQVFYNLMSGKEVEWFYEISNGFLKPHLHQLSNVRELVRLKHAPVVVGAGGPRLVTEGVYSLRDDDFVVDCSQIAAVKRAIERGESHQSLRKYQCPLFVALTDKFQDTVKLVEKKFEVQLNELKAETTIQVLREQLRQEKKLKEQVLSLTQSFIPTIGGRGEEFGKPDETPSSASVGDDNFPSSTNHTFEARRRPSSLSSGGALKPSKIL.

A coiled-coil region spans residues 248–276 (NELKAETTIQVLREQLRQEKKLKEQVLSL). A disordered region spans residues 285–337 (GGRGEEFGKPDETPSSASVGDDNFPSSTNHTFEARRRPSSLSSGGALKPSKIL). Residues 287 to 296 (RGEEFGKPDE) are compositionally biased toward basic and acidic residues. Polar residues predominate over residues 297 to 315 (TPSSASVGDDNFPSSTNHT).

This is an uncharacterized protein from Invertebrate iridescent virus 3 (IIV-3).